Consider the following 1046-residue polypeptide: Nuclear pore complex protein NUP96 (1046 aa).

The region spanning 51-187 is the Peptidase S59 domain; the sequence is SPDYFLKPCI…GLWKFFVPHF (137 aa). Over residues 283–295 the composition is skewed to polar residues; sequence RNVRPSQKIAQRN. The segment at 283–304 is disordered; sequence RNVRPSQKIAQRNSHQDPPPVV. Residue serine 523 is modified to Phosphoserine.

Part of the nuclear pore complex (NPC). The NPC has an eight-fold symmetrical structure comprising a central transport channel and two rings, the cytoplasmic and nuclear rings, to which eight filaments are attached. The cytoplasmic filaments have loose ends, while the nuclear filaments are joined in a distal ring, forming a nuclear basket. NPCs are highly dynamic in configuration and composition, and can be devided in 3 subcomplexes, the NUP62 subcomplex, the NUP107-160 subcomplex and the NUP93 subcomplex, containing approximately 30 different nucleoporin proteins. Expressed in roots, leaves, stems, flowers and siliques.

Its subcellular location is the nucleus membrane. It is found in the nucleus. The protein localises to the nuclear pore complex. Its function is as follows. Contributes to the transfer of mature mRNA from the nucleus to the cytosol. Required for both R gene-mediated and basal disease resistance. RNA export seems to play a critical role in stress responses and regulation of plant growth and development. This Arabidopsis thaliana (Mouse-ear cress) protein is Nuclear pore complex protein NUP96.